The chain runs to 423 residues: MLDLKLIRQEPDFIKEKLATRGVDPADIDALLELDAKRRELIVKSETMKAQRNTVSDEISQLKRNKEDADDKIKEMRQVSADIKDIDAQLDTLKDQVQDAAAHLPNIPNDNVPVGLTEDGSVELRQWGEKPNMDFTPKAHYEIGEDLGILDFEAGAKVSGSRYLYYLGAGARLERAVYNFFLDENTKAGFKEVLPPYIVNDDSMYGTGQFPKFKEDVYQLKDEAMTLIPTAEVPLVNYYRDEVIPEEELPVWFTALTPAFRSEAGSAGRDTRGLIRLHQFNKVEMVKFCKPENSWAELEALTKHAESLLQKLGLAYHVITLTTSDMSFTAAMTHDLEVWFPEQQTYREISSCSNTTDFQARRAHIQYRDENGKLQYVHALNGSGLAVGRAVAAILENYQNADGSVTIPDVLVPYMGGLTKITK.

230-232 (TAE) lines the L-serine pocket. 261–263 (RSE) serves as a coordination point for ATP. An L-serine-binding site is contributed by glutamate 284. 348–351 (EISS) is an ATP binding site. Serine 383 serves as a coordination point for L-serine.

The protein belongs to the class-II aminoacyl-tRNA synthetase family. Type-1 seryl-tRNA synthetase subfamily. Homodimer. The tRNA molecule binds across the dimer.

Its subcellular location is the cytoplasm. It carries out the reaction tRNA(Ser) + L-serine + ATP = L-seryl-tRNA(Ser) + AMP + diphosphate + H(+). The catalysed reaction is tRNA(Sec) + L-serine + ATP = L-seryl-tRNA(Sec) + AMP + diphosphate + H(+). The protein operates within aminoacyl-tRNA biosynthesis; selenocysteinyl-tRNA(Sec) biosynthesis; L-seryl-tRNA(Sec) from L-serine and tRNA(Sec): step 1/1. In terms of biological role, catalyzes the attachment of serine to tRNA(Ser). Is also able to aminoacylate tRNA(Sec) with serine, to form the misacylated tRNA L-seryl-tRNA(Sec), which will be further converted into selenocysteinyl-tRNA(Sec). The protein is Serine--tRNA ligase of Levilactobacillus brevis (strain ATCC 367 / BCRC 12310 / CIP 105137 / JCM 1170 / LMG 11437 / NCIMB 947 / NCTC 947) (Lactobacillus brevis).